The primary structure comprises 389 residues: NAD-dependent protein deacetylase sirtuin-2 (389 aa).

A disordered region spans residues 1-34 (MAEPDPSHPLETQAGKVQEAQDSDSDSEGGAAGG). A2 is subject to N-acetylalanine. Residues S23, S25, and S27 each carry the phosphoserine modification. The short motif at 41–51 (LRNLFSQTLSL) is the Nuclear export signal element. S53 is subject to Phosphoserine. Residues 57–338 (RLLDELTLEG…LALAELLGWK (282 aa)) form the Deacetylase sirtuin-type domain. NAD(+) is bound by residues 85–89 (AGIST) and 95–97 (DFR). Position 100 is a phosphoserine (S100). Position 167-170 (167-170 (QNID)) interacts with NAD(+). The active-site Proton acceptor is the H187. 2 residues coordinate Zn(2+): C195 and C200. Phosphoserine is present on S207. Residues C221 and C224 each coordinate Zn(2+). NAD(+) contacts are provided by residues 262–263 (TS), 286–288 (NKE), and C324. A disordered region spans residues 351 to 389 (SIDAQSGAGVPNPSTSASPKKSPPPAKDEARTTEREKPQ). The segment covering 361-370 (PNPSTSASPK) has biased composition (low complexity). S368 carries the phosphoserine; by CDK2 and CDK5 modification. The residue at position 372 (S372) is a Phosphoserine. The span at 376-389 (AKDEARTTEREKPQ) shows a compositional bias: basic and acidic residues.

This sequence belongs to the sirtuin family. Class I subfamily. In terms of assembly, interacts with CDC20, FOXO3 and FZR1. Associates with microtubules in primary cortical mature neurons. Homotrimer. Isoform 1 and isoform 2 interact (via both phosphorylated, unphosphorylated, active or inactive forms) with HDAC6; the interaction is necessary for the complex to interact with alpha-tubulin, suggesting that these proteins belong to a large complex that deacetylates the cytoskeleton. Interacts with FOXO1; the interaction is disrupted upon serum-starvation or oxidative stress, leading to increased level of acetylated FOXO1 and induction of autophagy. Interacts with RELA; the interaction occurs in the cytoplasm and is increased in a TNF-alpha-dependent manner. Interacts with HOXA10; the interaction is direct. Interacts with YWHAB and YWHAG; the interactions occur in a AKT-dependent manner and increase SIRT2-dependent TP53 deacetylation. Interacts with MAPK1/ERK2 and MAPK3/ERK1; the interactions increase SIRT2 stability and deacetylation activity. Interacts (phosphorylated form) with KMT5A isoform 2; the interaction is direct, stimulates KMT5A-mediated methyltransferase activity on histone at 'Lys-20' (H4K20me1) and is increased in a H(2)O(2)-induced oxidative stress-dependent manner. Interacts with G6PD; the interaction is enhanced by H(2)O(2) treatment. Interacts with a G1/S-specific cyclin E-CDK2 complex. Interacts with AURKA, CDK5R1 (p35 form) and CDK5 and HIF1A. Isoform 1, isoform 2 and isoform 5 interact (via C-terminus region) with EP300. Interacts with the tRNA ligase SARS1; recruited to the VEGFA promoter via interaction with SARS1. Interacts with BEX4; negatively regulates alpha-tubulin deacetylation by SIRT2. Requires Zn(2+) as cofactor. Phosphorylated at phosphoserine and phosphothreonine. Phosphorylated at Ser-368 by a mitotic kinase CDK1/cyclin B at the G2/M transition; phosphorylation regulates the delay in cell-cycle progression. Phosphorylated at Ser-368 by a mitotic kinase G1/S-specific cyclin E/Cdk2 complex; phosphorylation inactivates SIRT2-mediated alpha-tubulin deacetylation and thereby negatively regulates cell adhesion, cell migration and neurite outgrowth during neuronal differentiation. Phosphorylated by cyclin A/Cdk2 and p35-Cdk5 complexes and to a lesser extent by the cyclin D3/Cdk4 and cyclin B/Cdk1, in vitro. Dephosphorylated at Ser-368 by CDC14A and CDC14B around early anaphase. In terms of processing, acetylated by EP300; acetylation leads both to the decreased of SIRT2-mediated alpha-tubulin deacetylase activity and SIRT2-mediated down-regulation of TP53 transcriptional activity. Post-translationally, ubiquitinated. Isoform 1 is expressed in heart, liver and skeletal muscle, weakly expressed in the cortex. Isoform 2 is strongly expressed in the cortex, weakly expressed in heart and liver. Weakly expressed in several malignancies including breast, liver, brain, kidney and prostate cancers compared to normal tissues. Weakly expressed in glioma cell lines compared to normal brain tissues (at protein level). Widely expressed. Highly expressed in heart, brain and skeletal muscle, while it is weakly expressed in placenta and lung. Down-regulated in many gliomas suggesting that it may act as a tumor suppressor gene in human gliomas possibly through the regulation of microtubule network.

The protein localises to the nucleus. It localises to the cytoplasm. It is found in the perinuclear region. The protein resides in the cytoskeleton. Its subcellular location is the microtubule organizing center. The protein localises to the centrosome. It localises to the centriole. It is found in the spindle. The protein resides in the midbody. Its subcellular location is the chromosome. The protein localises to the perikaryon. It localises to the cell projection. It is found in the growth cone. The protein resides in the myelin membrane. It carries out the reaction N(6)-acetyl-L-lysyl-[protein] + NAD(+) + H2O = 2''-O-acetyl-ADP-D-ribose + nicotinamide + L-lysyl-[protein]. It catalyses the reaction N(6)-tetradecanoyl-L-lysyl-[protein] + NAD(+) + H2O = 2''-O-tetradecanoyl-ADP-D-ribose + nicotinamide + L-lysyl-[protein]. The enzyme catalyses N(6)-hexadecanoyl-L-lysyl-[protein] + NAD(+) + H2O = 2''-O-hexadecanoyl-ADP-D-ribose + nicotinamide + L-lysyl-[protein]. Inhibited by Sirtinol, A3 and M15 small molecules. Inhibited by nicotinamide. Inhibited by a macrocyclic peptide inhibitor S2iL5. Inhibited by EP300-induced acetylation. Its function is as follows. NAD-dependent protein deacetylase, which deacetylates internal lysines on histone and alpha-tubulin as well as many other proteins such as key transcription factors. Participates in the modulation of multiple and diverse biological processes such as cell cycle control, genomic integrity, microtubule dynamics, cell differentiation, metabolic networks, and autophagy. Plays a major role in the control of cell cycle progression and genomic stability. Functions in the antephase checkpoint preventing precocious mitotic entry in response to microtubule stress agents, and hence allowing proper inheritance of chromosomes. Positively regulates the anaphase promoting complex/cyclosome (APC/C) ubiquitin ligase complex activity by deacetylating CDC20 and FZR1, then allowing progression through mitosis. Associates both with chromatin at transcriptional start sites (TSSs) and enhancers of active genes. Plays a role in cell cycle and chromatin compaction through epigenetic modulation of the regulation of histone H4 'Lys-20' methylation (H4K20me1) during early mitosis. Specifically deacetylates histone H4 at 'Lys-16' (H4K16ac) between the G2/M transition and metaphase enabling H4K20me1 deposition by KMT5A leading to ulterior levels of H4K20me2 and H4K20me3 deposition throughout cell cycle, and mitotic S-phase progression. Deacetylates KMT5A modulating KMT5A chromatin localization during the mitotic stress response. Also deacetylates histone H3 at 'Lys-57' (H3K56ac) during the mitotic G2/M transition. Upon bacterium Listeria monocytogenes infection, deacetylates 'Lys-18' of histone H3 in a receptor tyrosine kinase MET- and PI3K/Akt-dependent manner, thereby inhibiting transcriptional activity and promoting late stages of listeria infection. During oocyte meiosis progression, may deacetylate histone H4 at 'Lys-16' (H4K16ac) and alpha-tubulin, regulating spindle assembly and chromosome alignment by influencing microtubule dynamics and kinetochore function. Deacetylates histone H4 at 'Lys-16' (H4K16ac) at the VEGFA promoter and thereby contributes to regulate expression of VEGFA, a key regulator of angiogenesis. Deacetylates alpha-tubulin at 'Lys-40' and hence controls neuronal motility, oligodendroglial cell arbor projection processes and proliferation of non-neuronal cells. Phosphorylation at Ser-368 by a G1/S-specific cyclin E-CDK2 complex inactivates SIRT2-mediated alpha-tubulin deacetylation, negatively regulating cell adhesion, cell migration and neurite outgrowth during neuronal differentiation. Deacetylates PARD3 and participates in the regulation of Schwann cell peripheral myelination formation during early postnatal development and during postinjury remyelination. Involved in several cellular metabolic pathways. Plays a role in the regulation of blood glucose homeostasis by deacetylating and stabilizing phosphoenolpyruvate carboxykinase PCK1 activity in response to low nutrient availability. Acts as a key regulator in the pentose phosphate pathway (PPP) by deacetylating and activating the glucose-6-phosphate G6PD enzyme, and therefore, stimulates the production of cytosolic NADPH to counteract oxidative damage. Maintains energy homeostasis in response to nutrient deprivation as well as energy expenditure by inhibiting adipogenesis and promoting lipolysis. Attenuates adipocyte differentiation by deacetylating and promoting FOXO1 interaction to PPARG and subsequent repression of PPARG-dependent transcriptional activity. Plays a role in the regulation of lysosome-mediated degradation of protein aggregates by autophagy in neuronal cells. Deacetylates FOXO1 in response to oxidative stress or serum deprivation, thereby negatively regulating FOXO1-mediated autophagy. Deacetylates a broad range of transcription factors and co-regulators regulating target gene expression. Deacetylates transcriptional factor FOXO3 stimulating the ubiquitin ligase SCF(SKP2)-mediated FOXO3 ubiquitination and degradation. Deacetylates HIF1A and therefore promotes HIF1A degradation and inhibition of HIF1A transcriptional activity in tumor cells in response to hypoxia. Deacetylates RELA in the cytoplasm inhibiting NF-kappaB-dependent transcription activation upon TNF-alpha stimulation. Inhibits transcriptional activation by deacetylating p53/TP53 and EP300. Also deacetylates EIF5A. Functions as a negative regulator on oxidative stress-tolerance in response to anoxia-reoxygenation conditions. Plays a role as tumor suppressor. In addition to protein deacetylase activity, also has activity toward long-chain fatty acyl groups and mediates protein-lysine demyristoylation and depalmitoylation of target proteins, such as ARF6 and KRAS, thereby regulating their association with membranes. Deacetylates EP300, alpha-tubulin and histone H3 and H4. In terms of biological role, lacks deacetylation activity, at least toward known SIRT2 targets. This Homo sapiens (Human) protein is NAD-dependent protein deacetylase sirtuin-2 (SIRT2).